A 230-amino-acid chain; its full sequence is RNA polymerase sigma factor FliA (230 aa).

The sigma-70 factor domain-2 stretch occupies residues 6–78 (LWQRYVPLVR…MLDELRSRDW (73 aa)). Positions 33-36 (DLLQ) match the Interaction with polymerase core subunit RpoC motif. The segment at 86-156 (NAREVASAMQ…VEPMLEGHED (71 aa)) is sigma-70 factor domain-3. The segment at 175-223 (AIEALPEREKMVLTLYYQEELNLKEIGAVLEVGESRVSQLHSQAIKRLR) is sigma-70 factor domain-4. Residues 197 to 216 (LKEIGAVLEVGESRVSQLHS) constitute a DNA-binding region (H-T-H motif).

Belongs to the sigma-70 factor family. FliA subfamily.

It localises to the cytoplasm. In terms of biological role, sigma factors are initiation factors that promote the attachment of RNA polymerase to specific initiation sites and are then released. This sigma factor controls the expression of flagella-related genes. The chain is RNA polymerase sigma factor FliA from Yersinia enterocolitica.